Here is a 124-residue protein sequence, read N- to C-terminus: Small ribosomal subunit protein uS12 (124 aa).

A 3-methylthioaspartic acid modification is found at Asp-89. Residues 104-124 (ALGVEDRKRGRSKYGAKRPKA) form a disordered region. Positions 112 to 124 (RGRSKYGAKRPKA) are enriched in basic residues.

The protein belongs to the universal ribosomal protein uS12 family. In terms of assembly, part of the 30S ribosomal subunit. Contacts proteins S8 and S17. May interact with IF1 in the 30S initiation complex.

In terms of biological role, with S4 and S5 plays an important role in translational accuracy. Its function is as follows. Interacts with and stabilizes bases of the 16S rRNA that are involved in tRNA selection in the A site and with the mRNA backbone. Located at the interface of the 30S and 50S subunits, it traverses the body of the 30S subunit contacting proteins on the other side and probably holding the rRNA structure together. The combined cluster of proteins S8, S12 and S17 appears to hold together the shoulder and platform of the 30S subunit. This chain is Small ribosomal subunit protein uS12, found in Treponema denticola (strain ATCC 35405 / DSM 14222 / CIP 103919 / JCM 8153 / KCTC 15104).